The chain runs to 880 residues: Valine--tRNA ligase (880 aa).

Positions 47–57 (PNITGKLHLGH) match the 'HIGH' region motif. Residues 526–530 (KMSKS) carry the 'KMSKS' region motif. K529 is a binding site for ATP. A coiled-coil region spans residues 810 to 845 (LLDLVDREKELERLNKEKTKLEGEILRVEKKLSNER).

This sequence belongs to the class-I aminoacyl-tRNA synthetase family. ValS type 1 subfamily. As to quaternary structure, monomer.

The protein localises to the cytoplasm. The enzyme catalyses tRNA(Val) + L-valine + ATP = L-valyl-tRNA(Val) + AMP + diphosphate. Functionally, catalyzes the attachment of valine to tRNA(Val). As ValRS can inadvertently accommodate and process structurally similar amino acids such as threonine, to avoid such errors, it has a 'posttransfer' editing activity that hydrolyzes mischarged Thr-tRNA(Val) in a tRNA-dependent manner. The chain is Valine--tRNA ligase from Clostridium perfringens (strain 13 / Type A).